The sequence spans 694 residues: Cyclic nucleotide-gated channel beta-3 (694 aa).

Over 1–210 (MLKSLTVKFN…SIDSYTDRVY (210 aa)) the chain is Cytoplasmic. Disordered regions lie at residues 24-82 (CPNL…DPEC) and 146-177 (ENFPEVEASSQTAMSTNISPKQENNSKLKEHQ). Polar residues-rich tracts occupy residues 26-40 (NLSSLSQPTIAQGDN) and 153-168 (ASSQTAMSTNISPKQE). Residues 211-234 (LLWLLLVTIAYNWNCWLLPVRLVF) form a helical membrane-spanning segment. Residues 235-241 (PCQTPDN) are Extracellular-facing. A helical transmembrane segment spans residues 242–262 (KNYWIITDIVCDIIYLCDILL). At 263–291 (IQPRLQFVRGGEIIVDSNELKRNYRSSTK) the chain is on the cytoplasmic side. The helical transmembrane segment at 292 to 309 (FRMDVASLLPFEVLYIFF) threads the bilayer. Residues 310–312 (GVN) are Extracellular-facing. A helical membrane pass occupies residues 313-327 (PIFRANRILKYTSFF). At 328-340 (EFNHHLESIMDKA) the chain is on the cytoplasmic side. The tract at residues 340–439 (AYVYRVIRTT…IGQMRDVIGA (100 aa)) is ion conduction pathway. The helical transmembrane segment at 341–363 (YVYRVIRTTGYLLFLLHINACVY) threads the bilayer. At 364 to 385 (YWASDYEGIGSTKWVYNGEGNK) the chain is on the extracellular side. Helical transmembrane passes span 386-412 (YLRCFYWAVRTLITIGGLPEPQTSFEI) and 413-437 (VFQFLNFFSGVFVFSSLIGQMRDVI). The segment at 399–402 (TIGG) is selectivity filter. At 438–694 (GAATANQNYF…KGKRKTTTQK (257 aa)) the chain is on the cytoplasmic side. Residues 442–518 (ANQNYFQACM…SIIDKVELFK (77 aa)) are C-linker. The interval 522–638 (TQMIYDLLLR…LLMKKAKILL (117 aa)) is cyclic nucleotide-binding domain. Positions 583, 584, 596, and 597 each coordinate 3',5'-cyclic GMP.

The protein belongs to the cyclic nucleotide-gated cation channel (TC 1.A.1.5) family. CNGB3 subfamily. As to quaternary structure, forms heterotetrameric channels composed of CNGA3 and CNGB3 subunits with 3:1 stoichiometry. In terms of tissue distribution, small subset of retinal photoreceptor cells and testis.

Its subcellular location is the cell membrane. It carries out the reaction Ca(2+)(in) = Ca(2+)(out). The catalysed reaction is Na(+)(in) = Na(+)(out). It catalyses the reaction K(+)(in) = K(+)(out). The enzyme catalyses NH4(+)(in) = NH4(+)(out). It carries out the reaction Rb(+)(in) = Rb(+)(out). The catalysed reaction is Li(+)(in) = Li(+)(out). It catalyses the reaction Cs(+)(in) = Cs(+)(out). In terms of biological role, pore-forming subunit of the cone cyclic nucleotide-gated channel. Mediates cone photoresponses at bright light converting transient changes in intracellular cGMP levels into electrical signals. In the dark, cGMP levels are high and keep the channel open enabling a steady inward current carried by Na(+) and Ca(2+) ions that leads to membrane depolarization and neurotransmitter release from synaptic terminals. Upon photon absorption cGMP levels decline leading to channel closure and membrane hyperpolarization that ultimately slows neurotransmitter release and signals the presence of light, the end point of the phototransduction cascade. Conducts cGMP- and cAMP-gated ion currents, with permeability for monovalent and divalent cations. The polypeptide is Cyclic nucleotide-gated channel beta-3 (Mus musculus (Mouse)).